A 337-amino-acid chain; its full sequence is Protein RecA (337 aa).

Gly-66–Thr-73 contributes to the ATP binding site.

This sequence belongs to the RecA family.

It localises to the cytoplasm. Its function is as follows. Can catalyze the hydrolysis of ATP in the presence of single-stranded DNA, the ATP-dependent uptake of single-stranded DNA by duplex DNA, and the ATP-dependent hybridization of homologous single-stranded DNAs. It interacts with LexA causing its activation and leading to its autocatalytic cleavage. This chain is Protein RecA, found in Mesomycoplasma hyopneumoniae (strain 232) (Mycoplasma hyopneumoniae).